Reading from the N-terminus, the 186-residue chain is Acireductone dioxygenase (186 aa).

Positions 89, 91, 95, and 134 each coordinate Fe(2+). Residues H89, H91, E95, and H134 each contribute to the Ni(2+) site.

The protein belongs to the acireductone dioxygenase (ARD) family. Fe(2+) is required as a cofactor. Requires Ni(2+) as cofactor.

The protein localises to the cytoplasm. Its subcellular location is the nucleus. It carries out the reaction 1,2-dihydroxy-5-(methylsulfanyl)pent-1-en-3-one + O2 = 4-methylsulfanyl-2-oxobutanoate + formate + 2 H(+). The catalysed reaction is 1,2-dihydroxy-5-(methylsulfanyl)pent-1-en-3-one + O2 = 3-(methylsulfanyl)propanoate + CO + formate + 2 H(+). The protein operates within amino-acid biosynthesis; L-methionine biosynthesis via salvage pathway; L-methionine from S-methyl-5-thio-alpha-D-ribose 1-phosphate: step 5/6. In terms of biological role, catalyzes 2 different reactions between oxygen and the acireductone 1,2-dihydroxy-3-keto-5-methylthiopentene (DHK-MTPene) depending upon the metal bound in the active site. Fe-containing acireductone dioxygenase (Fe-ARD) produces formate and 2-keto-4-methylthiobutyrate (KMTB), the alpha-ketoacid precursor of methionine in the methionine recycle pathway. Ni-containing acireductone dioxygenase (Ni-ARD) produces methylthiopropionate, carbon monoxide and formate, and does not lie on the methionine recycle pathway. The sequence is that of Acireductone dioxygenase from Drosophila melanogaster (Fruit fly).